The following is a 410-amino-acid chain: Meiotic driver wtf18 (410 aa).

The tract at residues 1-39 is disordered; the sequence is MKNKGYPLRSSMDELSTKNDNEIDLEKGPLPEYNSEDGS. A compositionally biased stretch (basic and acidic residues) spans 11–29; the sequence is SMDELSTKNDNEIDLEKGP. Helical transmembrane passes span 89–109, 119–139, 149–169, 174–194, 204–224, 229–249, 265–285, 289–309, 319–339, and 353–373; these read LLIS…CVNP, AFFV…FCFF, CIKV…VFLA, VTAV…AKCI, CVKV…VGLY, DLVV…FGCV, CSIS…IWTL, LFGL…TKGL, ATGY…LFFY, and FIGN…GGIG.

It belongs to the WTF family. Homomer. Forms protein aggregates. The two isoforms can interact with each other and with themselves. High sequence similarity is required for their interaction.

It is found in the spore membrane. The protein resides in the vacuole membrane. The protein localises to the ascus epiplasm. It localises to the cytoplasm. Its subcellular location is the endoplasmic reticulum membrane. Promotes unequal transmission of alleles from the parental zygote to progeny spores by acting as poison/antidote system where the poison and antidote proteins are produced from the same locus; the poison component is trans-acting and targets all spores within an ascus whereas the antidote component is spore-specific, leading to poisoning of all progeny that do not inherit the allele. Functionally, localizes isoform 2 to the vacuole thereby facilitating its degradation. In addition to suppressing isoform 2, also suppresses S.pombe strain 972 wtf13 isoform 2. Its function is as follows. Forms toxic aggregates that disrupt spore maturation. This chain is Meiotic driver wtf18, found in Schizosaccharomyces pombe (Fission yeast).